Here is a 389-residue protein sequence, read N- to C-terminus: UDP-N-acetylglucosamine--N-acetylmuramyl-(pentapeptide) pyrophosphoryl-undecaprenol N-acetylglucosamine transferase (389 aa).

Residues 17–19 (TAG), Asn-137, Arg-179, Ser-213, and Gln-308 contribute to the UDP-N-acetyl-alpha-D-glucosamine site.

It belongs to the glycosyltransferase 28 family. MurG subfamily.

It localises to the cell membrane. The catalysed reaction is di-trans,octa-cis-undecaprenyl diphospho-N-acetyl-alpha-D-muramoyl-L-alanyl-D-glutamyl-meso-2,6-diaminopimeloyl-D-alanyl-D-alanine + UDP-N-acetyl-alpha-D-glucosamine = di-trans,octa-cis-undecaprenyl diphospho-[N-acetyl-alpha-D-glucosaminyl-(1-&gt;4)]-N-acetyl-alpha-D-muramoyl-L-alanyl-D-glutamyl-meso-2,6-diaminopimeloyl-D-alanyl-D-alanine + UDP + H(+). Its pathway is cell wall biogenesis; peptidoglycan biosynthesis. Functionally, cell wall formation. Catalyzes the transfer of a GlcNAc subunit on undecaprenyl-pyrophosphoryl-MurNAc-pentapeptide (lipid intermediate I) to form undecaprenyl-pyrophosphoryl-MurNAc-(pentapeptide)GlcNAc (lipid intermediate II). This chain is UDP-N-acetylglucosamine--N-acetylmuramyl-(pentapeptide) pyrophosphoryl-undecaprenol N-acetylglucosamine transferase, found in Rhodococcus erythropolis (strain PR4 / NBRC 100887).